A 352-amino-acid polypeptide reads, in one-letter code: C-X-C chemokine receptor type 4 (352 aa).

The segment at Met1–Tyr21 is important for chemokine binding and signaling. Over Met1 to Arg38 the chain is Extracellular. Tyr7 is modified (sulfotyrosine). Residue Asn11 is glycosylated (N-linked (GlcNAc...) asparagine). Position 12 is a sulfotyrosine (Tyr12). Ser18 is a glycosylation site (O-linked (Xyl...) (chondroitin sulfate) serine). Tyr21 bears the Sulfotyrosine mark. Disulfide bonds link Cys28-Cys274 and Cys109-Cys186. A helical membrane pass occupies residues Ile39–Met63. The Cytoplasmic segment spans residues Gly64 to Arg77. Residues Leu78–Val99 traverse the membrane as a helical segment. Positions Trp94–Asp97 are chemokine binding. Residues Ala100–Lys110 are Extracellular-facing. The chain crosses the membrane as a helical span at residues Ala111–Ile130. A chemokine binding region spans residues His113–Thr117. Residues Ser131 to Lys154 lie on the Cytoplasmic side of the membrane. The Important for signaling motif lies at Asp133–Tyr135. Positions Tyr135–Pro147 are involved in dimerization; when bound to chemokine. Residues Val155–Phe174 form a helical membrane-spanning segment. At Ala175–Trp195 the chain is on the extracellular side. The segment at Cys186–Tyr190 is chemokine binding, important for signaling. Positions Pro191–Leu210 are involved in dimerization. A helical transmembrane segment spans residues Val196–Leu216. Residues Ser217 to Thr241 are Cytoplasmic-facing. The chain crosses the membrane as a helical span at residues Val242–Ile261. Residues Asp262–Lys282 lie on the Extracellular side of the membrane. Residues Leu266–Glu268 are involved in dimerization. Residues Trp283–Tyr302 traverse the membrane as a helical segment. Over Ala303 to Ser352 the chain is Cytoplasmic. Phosphoserine is present on residues Ser319 and Ser321. A phosphoserine; by PKC and GRK6 mark is found at Ser324 and Ser325. Positions Leu329 to Ser352 are disordered. Position 330 is a phosphoserine; by GRK6 (Ser330). A Glycyl lysine isopeptide (Lys-Gly) (interchain with G-Cter in ubiquitin) cross-link involves residue Lys331. Positions His337–Ser352 are enriched in low complexity. Position 339 is a phosphoserine; by GRK6 (Ser339). Phosphoserine is present on residues Ser348 and Ser351.

This sequence belongs to the G-protein coupled receptor 1 family. As to quaternary structure, monomer. Can form homodimers. Interacts with CD164. Interacts with ARRB2; the interaction is dependent on the C-terminal phosphorylation of CXCR4 and allows activation of MAPK1 and MAPK3. Interacts with ARR3; the interaction is dependent on the C-terminal phosphorylation of CXCR4 and modulates calcium mobilization. Interacts with RNF113A; the interaction, enhanced by CXCL12, promotes CXCR4 ubiquitination and subsequent degradation. Interacts (via the cytoplasmic C-terminal) with ITCH (via the WW domains I and II); the interaction, enhanced by CXCL12, promotes CXCR4 ubiquitination and leads to its degradation. Interacts with extracellular ubiquitin. Interacts with DBN1; this interaction is enhanced by antigenic stimulation. Following LPS binding, may form a complex with GDF5, HSP90AA1 and HSPA8. Post-translationally, phosphorylated on agonist stimulation. Rapidly phosphorylated on serine and threonine residues in the C-terminal. Phosphorylation at Ser-324 and Ser-325 leads to recruitment of ITCH, ubiquitination and protein degradation. Ubiquitinated after ligand binding, leading to its degradation. Ubiquitinated by ITCH at the cell membrane on agonist stimulation. The ubiquitin-dependent mechanism, endosomal sorting complex required for transport (ESCRT), then targets CXCR4 for lysosomal degradation. This process is dependent also on prior Ser-/Thr-phosphorylation in the C-terminal of CXCR4. Also binding of ARRB1 to STAM negatively regulates CXCR4 sorting to lysosomes though modulating ubiquitination of SFR5S. In terms of processing, sulfation is required for efficient binding of CXCL12/SDF-1alpha and promotes its dimerization. Post-translationally, O- and N-glycosylated. N-glycosylation can mask coreceptor function. The O-glycosylation chondroitin sulfate attachment does not affect interaction with CXCL12/SDF-1alpha nor its coreceptor activity.

The protein resides in the cell membrane. It is found in the cell junction. The protein localises to the early endosome. Its subcellular location is the late endosome. It localises to the lysosome. Functionally, receptor for the C-X-C chemokine CXCL12/SDF-1 that transduces a signal by increasing intracellular calcium ion levels and enhancing MAPK1/MAPK3 activation. Involved in the AKT signaling cascade. Plays a role in regulation of cell migration, e.g. during wound healing. Acts as a receptor for extracellular ubiquitin; leading to enhanced intracellular calcium ions and reduced cellular cAMP levels. Binds bacterial lipopolysaccharide (LPS) et mediates LPS-induced inflammatory response, including TNF secretion by monocytes. Involved in hematopoiesis and in cardiac ventricular septum formation. Also plays an essential role in vascularization of the gastrointestinal tract, probably by regulating vascular branching and/or remodeling processes in endothelial cells. Involved in cerebellar development. In the CNS, could mediate hippocampal-neuron survival. The polypeptide is C-X-C chemokine receptor type 4 (CXCR4) (Papio anubis (Olive baboon)).